The chain runs to 812 residues: Plasminogen (812 aa).

The signal sequence occupies residues 1 to 19 (MDHKEIILLFLLFLKPGQG). The region spanning 20–98 (DSLDGYVSTQ…RDVILFEKRV (79 aa)) is the PAN domain. 21 disulfide bridges follow: Cys49/Cys73, Cys53/Cys61, Cys103/Cys181, Cys124/Cys164, Cys152/Cys176, Cys185/Cys262, Cys188/Cys316, Cys206/Cys245, Cys234/Cys257, Cys275/Cys352, Cys296/Cys335, Cys324/Cys347, Cys376/Cys454, Cys397/Cys437, Cys425/Cys449, Cys481/Cys560, Cys502/Cys543, Cys531/Cys555, Cys568/Cys687, Cys578/Cys586, and Cys609/Cys625. Kringle domains follow at residues 102 to 181 (ECKT…IPEC), 184 to 262 (ECMY…IPRC), 274 to 352 (QCLK…IPSC), 375 to 454 (ECYQ…LKRC), and 480 to 560 (DCMY…IPLC). The Peptidase S1 domain maps to 582–810 (VVGGCVANPH…YVNWIEREMR (229 aa)). Ser598 carries the post-translational modification Phosphoserine. Residues His624 and Asp667 each act as charge relay system in the active site. Ser690 bears the Phosphoserine mark. 3 disulfides stabilise this stretch: Cys701–Cys768, Cys731–Cys747, and Cys758–Cys786. The active-site Charge relay system is Ser762.

Belongs to the peptidase S1 family. Plasminogen subfamily. Interacts (both mature PLG and the angiostatin peptide) with AMOT and CSPG4. Interacts (via the Kringle domains) with HRG; the interaction tethers PLG to the cell surface and enhances its activation. Interacts (via Kringle 4 domain) with ADA; the interaction stimulates PLG activation when in complex with DPP4. Angiostatin: Interacts with ATP5F1A; the interaction inhibits most of the angiogenic effects of angiostatin. In the presence of the inhibitor, the activation involves only cleavage after Arg-581, yielding two chains held together by two disulfide bonds. In the absence of the inhibitor, the activation involves additionally the removal of the activation peptide.

The protein localises to the secreted. The enzyme catalyses Preferential cleavage: Lys-|-Xaa &gt; Arg-|-Xaa, higher selectivity than trypsin. Converts fibrin into soluble products.. With respect to regulation, converted into plasmin by plasminogen activators, both plasminogen and its activator being bound to fibrin. Cannot be activated with streptokinase. Plasmin dissolves the fibrin of blood clots and acts as a proteolytic factor in a variety of other processes including embryonic development, tissue remodeling, tumor invasion, and inflammation. In ovulation, weakens the walls of the Graafian follicle. It activates the urokinase-type plasminogen activator, collagenases and several complement zymogens, such as C1, C4 and C5. Cleavage of fibronectin and laminin leads to cell detachment and apoptosis. Also cleaves fibrin, thrombospondin and von Willebrand factor. Its role in tissue remodeling and tumor invasion may be modulated by CSPG4. Binds to cells. In terms of biological role, angiostatin is an angiogenesis inhibitor that blocks neovascularization and growth of experimental primary and metastatic tumors in vivo. The sequence is that of Plasminogen (Plg) from Rattus norvegicus (Rat).